We begin with the raw amino-acid sequence, 251 residues long: 3-deoxy-manno-octulosonate cytidylyltransferase (251 aa).

Belongs to the KdsB family.

Its subcellular location is the cytoplasm. The enzyme catalyses 3-deoxy-alpha-D-manno-oct-2-ulosonate + CTP = CMP-3-deoxy-beta-D-manno-octulosonate + diphosphate. The protein operates within nucleotide-sugar biosynthesis; CMP-3-deoxy-D-manno-octulosonate biosynthesis; CMP-3-deoxy-D-manno-octulosonate from 3-deoxy-D-manno-octulosonate and CTP: step 1/1. Its pathway is bacterial outer membrane biogenesis; lipopolysaccharide biosynthesis. Functionally, activates KDO (a required 8-carbon sugar) for incorporation into bacterial lipopolysaccharide in Gram-negative bacteria. This chain is 3-deoxy-manno-octulosonate cytidylyltransferase, found in Alcanivorax borkumensis (strain ATCC 700651 / DSM 11573 / NCIMB 13689 / SK2).